Here is a 228-residue protein sequence, read N- to C-terminus: Ankyrin repeat domain-containing protein 46 (228 aa).

4 ANK repeats span residues 11–40 (QTNVPLLQACIDGDFNYSKRLLESGFDPNI), 44–73 (RGRTGLHLAAARGNVDICQLLHKFGADLLA), 77–103 (QGNTALHLCGHVDTIQFLVSNGLKIDI), and 107–138 (QGATPLVLAKRRGVNKDVIRLLESLEEQEVKG). Residues 195–215 (VLLLIFVIALLSLGIAYYVSG) traverse the membrane as a helical segment.

It localises to the membrane. In Bos taurus (Bovine), this protein is Ankyrin repeat domain-containing protein 46 (ANKRD46).